The chain runs to 778 residues: Hyaluronate lyase (778 aa).

The segment at residues 1–33 is a signal peptide (tat-type signal); sequence MSWNRRSFLGALGVTCLAGAGMVPIVRPRTAAA. Active-site residues include asparagine 200, histidine 250, and tyrosine 259.

Belongs to the polysaccharide lyase 8 family. Post-translationally, predicted to be exported by the Tat system. The position of the signal peptide cleavage has not been experimentally proven.

The catalysed reaction is [hyaluronan](n) = n 3-(4-deoxy-beta-D-gluc-4-enuronosyl)-N-acetyl-D-glucosamine + H2O. With respect to regulation, is salt-dependent and is active over a wide range of NaCl concentrations. Activity is slightly promoted by Ni(2+), and inhibited by most of the tested metal ions, including Li(+), K(+), Ba(2+), Mg(2+), Zn(2+), Ca(2+), Mn(2+) and Al(3+). Functionally, degrades hyaluronic acid into unsaturated disaccharides as the end products. Exhibits very low activity against various types of chondroitin sulfate variants. The protein is Hyaluronate lyase of Thermasporomyces composti.